The primary structure comprises 551 residues: Hydroxylamine reductase (551 aa).

Residues Cys-3, Cys-6, Cys-18, and Cys-25 each contribute to the [2Fe-2S] cluster site. His-249, Glu-273, Cys-317, Cys-405, Cys-433, Cys-459, Glu-493, and Lys-495 together coordinate hybrid [4Fe-2O-2S] cluster. Cysteine persulfide is present on Cys-405.

The protein belongs to the HCP family. [2Fe-2S] cluster is required as a cofactor. Hybrid [4Fe-2O-2S] cluster serves as cofactor.

It localises to the cytoplasm. It catalyses the reaction A + NH4(+) + H2O = hydroxylamine + AH2 + H(+). Its function is as follows. Catalyzes the reduction of hydroxylamine to form NH(3) and H(2)O. This Actinobacillus pleuropneumoniae serotype 7 (strain AP76) protein is Hydroxylamine reductase.